The primary structure comprises 403 residues: Pyruvate, phosphate dikinase regulatory protein 1, chloroplastic (403 aa).

The N-terminal 86 residues, 1 to 86 (MALLSAMKLQ…NTTGPMRPIE (86 aa)), are a transit peptide targeting the chloroplast. A disordered region spans residues 1-108 (MALLSAMKLQ…DVSSSSNGVS (108 aa)). Composition is skewed to low complexity over residues 17–26 (SSNLNPNSKP), 69–80 (STITNGSNNTTG), and 87–108 (SSSRTDVSTLDSDVSSSSNGVS). 269–276 (GVSRTGKT) serves as a coordination point for ADP.

This sequence belongs to the pyruvate, phosphate/water dikinase regulatory protein family. PDRP subfamily. Interacts with PPDK1. Expressed in green tissues.

The protein localises to the plastid. It is found in the chloroplast stroma. The catalysed reaction is N(tele)-phospho-L-histidyl/L-threonyl-[pyruvate, phosphate dikinase] + ADP = N(tele)-phospho-L-histidyl/O-phospho-L-threonyl-[pyruvate, phosphate dikinase] + AMP + H(+). It carries out the reaction N(tele)-phospho-L-histidyl/O-phospho-L-threonyl-[pyruvate, phosphate dikinase] + phosphate + H(+) = N(tele)-phospho-L-histidyl/L-threonyl-[pyruvate, phosphate dikinase] + diphosphate. Regulated by light/dark exposure. In terms of biological role, bifunctional serine/threonine kinase and phosphorylase involved in the dark/light-mediated regulation of PPDK by catalyzing its phosphorylation/dephosphorylation. Dark/light-induced changes in stromal concentrations of the competing ADP and Pi substrates govern the direction of the reaction. In the dark, phosphorylates the catalytic intermediate of PPDK (PPDK-HisP), inactivating it. Light exposure induces the phosphorolysis reaction that reactivates PPDK. Unlike the kinase function which can utilize either Thr or Ser as target, the phosphorylase function has a strict substrate requirement for threonyl phosphate. This is Pyruvate, phosphate dikinase regulatory protein 1, chloroplastic (RP1) from Arabidopsis thaliana (Mouse-ear cress).